A 213-amino-acid polypeptide reads, in one-letter code: Orotate phosphoribosyltransferase (213 aa).

K26 is a binding site for 5-phospho-alpha-D-ribose 1-diphosphate. 34–35 (FF) lines the orotate pocket. 5-phospho-alpha-D-ribose 1-diphosphate-binding positions include 72–73 (YK), R99, K100, K103, H105, and 124–132 (DDVITAGTA). Orotate contacts are provided by T128 and R156.

It belongs to the purine/pyrimidine phosphoribosyltransferase family. PyrE subfamily. As to quaternary structure, homodimer. Mg(2+) is required as a cofactor.

The enzyme catalyses orotidine 5'-phosphate + diphosphate = orotate + 5-phospho-alpha-D-ribose 1-diphosphate. It functions in the pathway pyrimidine metabolism; UMP biosynthesis via de novo pathway; UMP from orotate: step 1/2. Its function is as follows. Catalyzes the transfer of a ribosyl phosphate group from 5-phosphoribose 1-diphosphate to orotate, leading to the formation of orotidine monophosphate (OMP). The chain is Orotate phosphoribosyltransferase from Enterobacter sp. (strain 638).